The sequence spans 161 residues: Peptidyl-prolyl cis-trans isomerase (161 aa).

A PPIase cyclophilin-type domain is found at 6-160 (FFDIKAGDER…KKIIIEDCGE (155 aa)).

The protein belongs to the cyclophilin-type PPIase family. PPIase A subfamily. Found mainly in the tegument, gut epithelium, and muscle layers. Also found in the interior of the parasite.

The catalysed reaction is [protein]-peptidylproline (omega=180) = [protein]-peptidylproline (omega=0). Its activity is regulated as follows. Binds cyclosporin A (CsA). CsA mediates some of its effects via an inhibitory action on PPIase. In terms of biological role, PPIases accelerate the folding of proteins. It catalyzes the cis-trans isomerization of proline imidic peptide bonds in oligopeptides. The protein is Peptidyl-prolyl cis-trans isomerase of Schistosoma mansoni (Blood fluke).